We begin with the raw amino-acid sequence, 461 residues long: Photosystem II CP43 reaction center protein (461 aa).

The propeptide occupies 1-2; the sequence is ME. Position 3 is an N-acetylthreonine (Thr-3). Residue Thr-3 is modified to Phosphothreonine. 5 helical membrane-spanning segments follow: residues 57–81, 122–143, 166–188, 243–263, and 279–300; these read LFEV…PHIA, LIGP…KDKN, KAMY…RVIT, TPWP…LSYS, and WFNN…ASQS. Residue Glu-355 participates in [CaMn4O5] cluster binding. The chain crosses the membrane as a helical span at residues 435-459; it reads RARAAAAGFEKGIDRFDEPVLSMRP.

This sequence belongs to the PsbB/PsbC family. PsbC subfamily. In terms of assembly, PSII is composed of 1 copy each of membrane proteins PsbA, PsbB, PsbC, PsbD, PsbE, PsbF, PsbH, PsbI, PsbJ, PsbK, PsbL, PsbM, PsbT, PsbX, PsbY, PsbZ, Psb30/Ycf12, at least 3 peripheral proteins of the oxygen-evolving complex and a large number of cofactors. It forms dimeric complexes. Requires Binds multiple chlorophylls and provides some of the ligands for the Ca-4Mn-5O cluster of the oxygen-evolving complex. It may also provide a ligand for a Cl- that is required for oxygen evolution. PSII binds additional chlorophylls, carotenoids and specific lipids. as cofactor. In terms of processing, phosphorylated in vitro.

Its subcellular location is the plastid. It is found in the chloroplast thylakoid membrane. One of the components of the core complex of photosystem II (PSII). It binds chlorophyll and helps catalyze the primary light-induced photochemical processes of PSII. PSII is a light-driven water:plastoquinone oxidoreductase, using light energy to abstract electrons from H(2)O, generating O(2) and a proton gradient subsequently used for ATP formation. This chain is Photosystem II CP43 reaction center protein, found in Chlamydomonas reinhardtii (Chlamydomonas smithii).